The primary structure comprises 396 residues: MVRTQTESSTPPGIPGGSRQGPAMDGTAAEPRPGAGSLQHAQPPPQPRKKRPEDFKFGKILGEGSFSTVVLARELATSREYAIKILEKRHIIKENKVPYVTRERDVMSRLDHPFFVKLYFTFQDDEKLYFGLSYAKNGELLKYIRKIGSFDETCTRFYTAEIVSALEYLHGKGIIHRDLKPENILLNEDMYIQITDFGTAKVLSPESKQARANSFVGTAQYVSPELLTEKSACKSSDLWALGCIIYQLVAGLPPFRAGNEYLIFQKIIKLEYDFPEKFFPKARDLVEKLLVLDATKRLGCEEMEGYGPLKAHPFFESVTWENLHQQTPPKLTAYLPAMSEDDEDCYGNVSWPGWRARQVALGPPCTGLHARAPDPRVICSRKGRVSVPLRQACWWL.

The segment covering 1–11 (MVRTQTESSTP) has biased composition (polar residues). The segment at 1–53 (MVRTQTESSTPPGIPGGSRQGPAMDGTAAEPRPGAGSLQHAQPPPQPRKKRPE) is disordered. One can recognise a Protein kinase domain in the interval 55-315 (FKFGKILGEG…YGPLKAHPFF (261 aa)). Residues 65 to 67 (SFS) and K84 each bind ATP. Positions 86–130 (LEKRHIIKENKVPYVTRERDVMSRLDHPFFVKLYFTFQDDEKLYF) are PIF-pocket. ATP contacts are provided by residues 133-135 (SYA) and E139. Residue D178 is the Proton acceptor of the active site. The ATP site is built by E182 and D196.

Belongs to the protein kinase superfamily. AGC Ser/Thr protein kinase family. PDPK1 subfamily. Phosphorylated on tyrosine and serine/threonine.

It localises to the cytoplasm. The protein localises to the membrane. The enzyme catalyses L-seryl-[protein] + ATP = O-phospho-L-seryl-[protein] + ADP + H(+). The catalysed reaction is L-threonyl-[protein] + ATP = O-phospho-L-threonyl-[protein] + ADP + H(+). Phosphorylates and activates not only PKB/AKT, but also PKA, PKC-zeta, RPS6KA1 and RPS6KB1. May play a general role in signaling processes and in development. This chain is Putative 3-phosphoinositide-dependent protein kinase 2, found in Homo sapiens (Human).